The following is a 741-amino-acid chain: Phosphoribosylformylglycinamidine synthase subunit PurL (741 aa).

The active site involves His-54. Positions 57 and 96 each coordinate ATP. Glu-98 contacts Mg(2+). Residues 99 to 102 (SHNH) and Arg-121 each bind substrate. His-100 functions as the Proton acceptor in the catalytic mechanism. Asp-122 contributes to the Mg(2+) binding site. Gln-245 contributes to the substrate binding site. Asp-273 contributes to the Mg(2+) binding site. A substrate-binding site is contributed by 317 to 319 (ESQ). 2 residues coordinate ATP: Asp-500 and Gly-537. Asn-538 contributes to the Mg(2+) binding site. Substrate is bound at residue Ser-540.

The protein belongs to the FGAMS family. Monomer. Part of the FGAM synthase complex composed of 1 PurL, 1 PurQ and 2 PurS subunits.

The protein localises to the cytoplasm. It carries out the reaction N(2)-formyl-N(1)-(5-phospho-beta-D-ribosyl)glycinamide + L-glutamine + ATP + H2O = 2-formamido-N(1)-(5-O-phospho-beta-D-ribosyl)acetamidine + L-glutamate + ADP + phosphate + H(+). It functions in the pathway purine metabolism; IMP biosynthesis via de novo pathway; 5-amino-1-(5-phospho-D-ribosyl)imidazole from N(2)-formyl-N(1)-(5-phospho-D-ribosyl)glycinamide: step 1/2. Part of the phosphoribosylformylglycinamidine synthase complex involved in the purines biosynthetic pathway. Catalyzes the ATP-dependent conversion of formylglycinamide ribonucleotide (FGAR) and glutamine to yield formylglycinamidine ribonucleotide (FGAM) and glutamate. The FGAM synthase complex is composed of three subunits. PurQ produces an ammonia molecule by converting glutamine to glutamate. PurL transfers the ammonia molecule to FGAR to form FGAM in an ATP-dependent manner. PurS interacts with PurQ and PurL and is thought to assist in the transfer of the ammonia molecule from PurQ to PurL. The polypeptide is Phosphoribosylformylglycinamidine synthase subunit PurL (Shouchella clausii (strain KSM-K16) (Alkalihalobacillus clausii)).